We begin with the raw amino-acid sequence, 892 residues long: Alanine--tRNA ligase (892 aa).

The Zn(2+) site is built by H594, H598, C702, and H706.

The protein belongs to the class-II aminoacyl-tRNA synthetase family. It depends on Zn(2+) as a cofactor.

Its subcellular location is the cytoplasm. The catalysed reaction is tRNA(Ala) + L-alanine + ATP = L-alanyl-tRNA(Ala) + AMP + diphosphate. In terms of biological role, catalyzes the attachment of alanine to tRNA(Ala) in a two-step reaction: alanine is first activated by ATP to form Ala-AMP and then transferred to the acceptor end of tRNA(Ala). Also edits incorrectly charged Ser-tRNA(Ala) and Gly-tRNA(Ala) via its editing domain. This is Alanine--tRNA ligase from Pyrobaculum arsenaticum (strain DSM 13514 / JCM 11321 / PZ6).